A 422-amino-acid polypeptide reads, in one-letter code: Phosphoribosylamine--glycine ligase (422 aa).

Residues 107 to 312 (KDVMAAAGVR…LGQLLHAAAT (206 aa)) enclose the ATP-grasp domain. An ATP-binding site is contributed by 137-193 (GPPAGDPAWVVKDDRLAAGKGVVVTADRDVARAHGAALLEAGHPVLLESYLDGPEVS). 2 residues coordinate Mg(2+): glutamate 282 and asparagine 284.

The protein belongs to the GARS family. Requires Mg(2+) as cofactor. Mn(2+) serves as cofactor.

The enzyme catalyses 5-phospho-beta-D-ribosylamine + glycine + ATP = N(1)-(5-phospho-beta-D-ribosyl)glycinamide + ADP + phosphate + H(+). It participates in purine metabolism; IMP biosynthesis via de novo pathway; N(1)-(5-phospho-D-ribosyl)glycinamide from 5-phospho-alpha-D-ribose 1-diphosphate: step 2/2. This is Phosphoribosylamine--glycine ligase from Mycobacterium bovis (strain ATCC BAA-935 / AF2122/97).